We begin with the raw amino-acid sequence, 807 residues long: Glycerol-3-phosphate acyltransferase (807 aa).

Residues 305–310 (CHRSHM) carry the HXXXXD motif motif.

This sequence belongs to the GPAT/DAPAT family.

The protein resides in the cell inner membrane. It carries out the reaction sn-glycerol 3-phosphate + an acyl-CoA = a 1-acyl-sn-glycero-3-phosphate + CoA. The protein operates within phospholipid metabolism; CDP-diacylglycerol biosynthesis; CDP-diacylglycerol from sn-glycerol 3-phosphate: step 1/3. The protein is Glycerol-3-phosphate acyltransferase of Vibrio atlanticus (strain LGP32) (Vibrio splendidus (strain Mel32)).